We begin with the raw amino-acid sequence, 130 residues long: Small ribosomal subunit protein uS9 (130 aa).

Residues 108-130 are disordered; it reads PRMKERRKYGLKKARRAPQFSKR. The span at 111 to 130 shows a compositional bias: basic residues; that stretch reads KERRKYGLKKARRAPQFSKR.

Belongs to the universal ribosomal protein uS9 family.

This is Small ribosomal subunit protein uS9 from Desulforamulus reducens (strain ATCC BAA-1160 / DSM 100696 / MI-1) (Desulfotomaculum reducens).